Consider the following 1885-residue polypeptide: Chitin synthase 5 (1885 aa).

The 789-residue stretch at 1–789 folds into the Myosin motor domain; it reads MATRGNVPAH…SIALTGSQAA (789 aa). Position 99–106 (99–106) interacts with ATP; sequence GESGSGKT. N-linked (GlcNAc...) asparagine glycans are attached at residues asparagine 219 and asparagine 429. The interval 601–649 is disordered; the sequence is KPLRMPSVSRKKHDQLRRMASRRADRSPAPQEEEPLPGTEEAKVRRTKP. Basic residues predominate over residues 609 to 621; sequence SRKKHDQLRRMAS. The tract at residues 666–690 is actin-binding; it reads LDNITKSLTAPNVNNYFVFCLKPND. A glycan (N-linked (GlcNAc...) asparagine) is linked at asparagine 668. The segment at 794–817 is disordered; sequence GDIGSPSRPDTPGHNPFSDSKARL. The next 2 membrane-spanning stretches (helical) occupy residues 894–914 and 929–949; these read WLAI…KWIG and FAIN…IIVF. Residues 957–1016 enclose the Cytochrome b5 heme-binding domain; it reads QNVYSAAELSAHDGKGKHSAYVAIRGQVFDLGAFMPNHYPKIIPQSSLKKYAGVDATGLF. Asparagine 1043 and asparagine 1068 each carry an N-linked (GlcNAc...) asparagine glycan. The helical transmembrane segment at 1205–1225 threads the bilayer; that stretch reads ILLAVSILLCSVIGFKFFAAL. Asparagine 1462 and asparagine 1568 each carry an N-linked (GlcNAc...) asparagine glycan. Helical transmembrane passes span 1599–1619, 1626–1646, and 1653–1673; these read LLST…IVLL, VPLT…IIFI, and MIGW…GLPL. N-linked (GlcNAc...) asparagine glycans are attached at residues asparagine 1759 and asparagine 1790. The region spanning 1827-1882 is the DEK-C domain; the sequence is LPTDDMLLNEIRDILRTADLMTVTKKGIKQELERRFNVNLDMKRAYIGSATEAILS.

This sequence in the N-terminal section; belongs to the TRAFAC class myosin-kinesin ATPase superfamily. Myosin family. It in the C-terminal section; belongs to the chitin synthase family. Class V subfamily. Post-translationally, maximal activity requires trypsin activation, suggesting a zymogenic nature.

It localises to the cell membrane. The protein resides in the membrane. It catalyses the reaction [(1-&gt;4)-N-acetyl-beta-D-glucosaminyl](n) + UDP-N-acetyl-alpha-D-glucosamine = [(1-&gt;4)-N-acetyl-beta-D-glucosaminyl](n+1) + UDP + H(+). Functionally, polymerizes chitin, a structural polymer of the cell wall and septum, by transferring the sugar moiety of UDP-GlcNAc to the non-reducing end of the growing chitin polymer. CHS5 is required for the sustained growth at 37 degrees Celsius and is of critical importance for virulence. Especially important at infection temperatures for maintaining the cell wall integrity of developing yeast buds, elongating tips of hyphae, and random sites of expansion in sclerotic forms. In Exophiala dermatitidis (strain ATCC 34100 / CBS 525.76 / NIH/UT8656) (Black yeast), this protein is Chitin synthase 5.